The following is a 474-amino-acid chain: Trehalose-6-phosphate synthase (474 aa).

R10 contributes to the D-glucose 6-phosphate binding site. 22 to 23 (GG) is a UDP-alpha-D-glucose binding site. D-glucose 6-phosphate contacts are provided by Y77 and D131. Residues R263 and K268 each contribute to the UDP-alpha-D-glucose site. R301 serves as a coordination point for D-glucose 6-phosphate. UDP-alpha-D-glucose contacts are provided by residues F340 and 366–370 (LVAKE).

This sequence belongs to the glycosyltransferase 20 family. As to quaternary structure, homotetramer.

The enzyme catalyses D-glucose 6-phosphate + UDP-alpha-D-glucose = alpha,alpha-trehalose 6-phosphate + UDP + H(+). It participates in glycan biosynthesis; trehalose biosynthesis. Its function is as follows. Probably involved in the osmoprotection via the biosynthesis of trehalose. Catalyzes the transfer of glucose from UDP-alpha-D-glucose (UDP-Glc) to D-glucose 6-phosphate (Glc-6-P) to form trehalose-6-phosphate. Acts with retention of the anomeric configuration of the UDP-sugar donor. The polypeptide is Trehalose-6-phosphate synthase (Escherichia coli O6:K15:H31 (strain 536 / UPEC)).